The primary structure comprises 117 residues: Large ribosomal subunit protein uL18 (117 aa).

Belongs to the universal ribosomal protein uL18 family. As to quaternary structure, part of the 50S ribosomal subunit; part of the 5S rRNA/L5/L18/L25 subcomplex. Contacts the 5S and 23S rRNAs.

In terms of biological role, this is one of the proteins that bind and probably mediate the attachment of the 5S RNA into the large ribosomal subunit, where it forms part of the central protuberance. The protein is Large ribosomal subunit protein uL18 of Vibrio cholerae serotype O1 (strain ATCC 39541 / Classical Ogawa 395 / O395).